We begin with the raw amino-acid sequence, 461 residues long: Protein transport protein HofB homolog (461 aa).

ATP is bound at residue 222–229 (GPTGSGKT).

Belongs to the GSP E family.

This Escherichia coli (strain K12) protein is Protein transport protein HofB homolog (hofB).